Reading from the N-terminus, the 51-residue chain is Large ribosomal subunit protein bL33 (51 aa).

It belongs to the bacterial ribosomal protein bL33 family.

In Pseudomonas putida (strain ATCC 47054 / DSM 6125 / CFBP 8728 / NCIMB 11950 / KT2440), this protein is Large ribosomal subunit protein bL33.